The primary structure comprises 526 residues: 1,4-beta-D-glucan cellobiohydrolase B (526 aa).

A signal peptide spans 1 to 23 (MASSFQLYKALLFFSSLLSAVQA). Residues 24–458 (QKVGTQQAEV…SNIKFGPIGS (435 aa)) are catalytic. The active-site Nucleophile is the Glu-235. The active-site Proton donor is Glu-240. 2 N-linked (GlcNAc...) asparagine glycosylation sites follow: Asn-293 and Asn-400. The ser/Thr-rich linker stretch occupies residues 459–490 (TFGNGGGSGPTTTVTTSTATSTTSSATSTATG). The tract at residues 464–488 (GGSGPTTTVTTSTATSTTSSATSTA) is disordered. A compositionally biased stretch (low complexity) spans 468-488 (PTTTVTTSTATSTTSSATSTA). Positions 490–526 (GQAQHWEQCGGNGWTGPTVCASPWACTVVNSWYSQCL) constitute a CBM1 domain. Cystine bridges form between Cys-498–Cys-515 and Cys-509–Cys-525.

The protein belongs to the glycosyl hydrolase 7 (cellulase C) family.

It is found in the secreted. The enzyme catalyses Hydrolysis of (1-&gt;4)-beta-D-glucosidic linkages in cellulose and cellotetraose, releasing cellobiose from the non-reducing ends of the chains.. The biological conversion of cellulose to glucose generally requires three types of hydrolytic enzymes: (1) Endoglucanases which cut internal beta-1,4-glucosidic bonds; (2) Exocellobiohydrolases that cut the disaccharide cellobiose from the non-reducing end of the cellulose polymer chain; (3) Beta-1,4-glucosidases which hydrolyze the cellobiose and other short cello-oligosaccharides to glucose. In Emericella nidulans (strain FGSC A4 / ATCC 38163 / CBS 112.46 / NRRL 194 / M139) (Aspergillus nidulans), this protein is 1,4-beta-D-glucan cellobiohydrolase B (cbhB).